Here is a 192-residue protein sequence, read N- to C-terminus: MYQIVLGKVSTLSAGQLPDALIAQAPQGVRRASWLAGRVLLSRALSPLPEMVYGEQGKPAFSAGTPLWFNLSHSGDTIALLLSDEGEVGCDIEVIRPRDNWRSLANAVFSLGEHAEMEAERPERQLAAFWRIWTRKEAIVKQRGGSAWQIVSVDSTLPSALSVSQCQLDTLSLAVCTPTPFTLTPQTITKAL.

It belongs to the P-Pant transferase superfamily. Gsp/Sfp/HetI/AcpT family.

The enzyme catalyses apo-[ACP] + CoA = holo-[ACP] + adenosine 3',5'-bisphosphate + H(+). Its function is as follows. May be involved in an alternative pathway for phosphopantetheinyl transfer and holo-ACP synthesis. The native apo-protein substrate is unknown. This Salmonella typhi protein is 4'-phosphopantetheinyl transferase AcpT (acpT).